Consider the following 98-residue polypeptide: Cobalt transport protein CbiN (98 aa).

Transmembrane regions (helical) follow at residues 6–26 (VLMILGVIILTLAPLIMYSGL) and 68–88 (SLLFALQAAIGAIIIGYFFGY).

It belongs to the CbiN family. As to quaternary structure, forms an energy-coupling factor (ECF) transporter complex composed of an ATP-binding protein (A component, CbiO), a transmembrane protein (T component, CbiQ) and 2 possible substrate-capture proteins (S components, CbiM and CbiN) of unknown stoichimetry.

It localises to the cell membrane. It participates in cofactor biosynthesis; adenosylcobalamin biosynthesis. Functionally, part of the energy-coupling factor (ECF) transporter complex CbiMNOQ involved in cobalt import. The chain is Cobalt transport protein CbiN from Methanococcus maripaludis (strain DSM 14266 / JCM 13030 / NBRC 101832 / S2 / LL).